A 398-amino-acid polypeptide reads, in one-letter code: Transcription termination factor 1, mitochondrial (398 aa).

Residues 1-57 (MQSLSLGQTSISKGLNYLTIMAPGNLWHMRNNFLFGSRCWMTRFSAENIFKSVSFRL) constitute a mitochondrion transit peptide. Interaction with DNA stretches follow at residues 169–170 (RS), 246–250 (QSTKR), 323–330 (AEKKFNDK), 354–357 (SIST), and 383–390 (SKKRYEAK).

It belongs to the mTERF family. Monomer. Phosphoprotein with mostly four phosphate groups. While the DNA-binding activity is unaffected by the phosphorylation state, only the phosphorylated form of the protein is active for termination activity. Functioning seems to be regulated by phosphorylation.

The protein localises to the mitochondrion. Functionally, transcription termination factor. Binds to a 28 bp region within the tRNA(Leu(uur)) gene at a position immediately adjacent to and downstream of the 16S rRNA gene; this region comprises a tridecamer sequence critical for directing accurate termination. Binds DNA along the major grove and promotes DNA bending and partial unwinding. Promotes base flipping. Transcription termination activity appears to be polarized with highest specificity for transcripts initiated on the light strand. This Pongo abelii (Sumatran orangutan) protein is Transcription termination factor 1, mitochondrial (MTERF1).